The primary structure comprises 445 residues: Deoxyribodipyrimidine photo-lyase (445 aa).

A Photolyase/cryptochrome alpha/beta domain is found at 20-148; sequence SYVVYWMQAS…QVESNVIVPV (129 aa). Arg-239 is a binding site for DNA.

This sequence belongs to the DNA photolyase class-2 family. The cofactor is FAD. Coenzyme F420-(gamma-Glu)n is required as a cofactor.

The enzyme catalyses cyclobutadipyrimidine (in DNA) = 2 pyrimidine residues (in DNA).. Functionally, involved in repair of UV radiation-induced DNA damage. Catalyzes the light-dependent monomerization (300-600 nm) of cyclobutyl pyrimidine dimers (in cis-syn configuration), which are formed between adjacent bases on the same DNA strand upon exposure to ultraviolet radiation. The chain is Deoxyribodipyrimidine photo-lyase (phr) from Methanothermobacter thermautotrophicus (strain ATCC 29096 / DSM 1053 / JCM 10044 / NBRC 100330 / Delta H) (Methanobacterium thermoautotrophicum).